The primary structure comprises 104 residues: Small ribosomal subunit protein uS10 (104 aa).

This sequence belongs to the universal ribosomal protein uS10 family. As to quaternary structure, part of the 30S ribosomal subunit.

Functionally, involved in the binding of tRNA to the ribosomes. This is Small ribosomal subunit protein uS10 from Thermoplasma acidophilum (strain ATCC 25905 / DSM 1728 / JCM 9062 / NBRC 15155 / AMRC-C165).